Reading from the N-terminus, the 222-residue chain is uncharacterized protein (222 aa).

Positions 142-222 (ARRGGCVHPP…LPDPPSAGHL (81 aa)) are disordered. Over residues 160 to 169 (QSRSISSRRA) the composition is skewed to low complexity. Over residues 182-196 (PRRRPHRHRTRPQTR) the composition is skewed to basic residues.

This sequence belongs to the Rv1128c/1148c/1588c/1702c/1945/3466 family.

This is an uncharacterized protein from Mycobacterium tuberculosis (strain ATCC 25618 / H37Rv).